Reading from the N-terminus, the 159-residue chain is Ribosomal RNA large subunit methyltransferase H (159 aa).

G108 is a binding site for S-adenosyl-L-methionine.

The protein belongs to the RNA methyltransferase RlmH family. Homodimer.

The protein localises to the cytoplasm. The catalysed reaction is pseudouridine(1915) in 23S rRNA + S-adenosyl-L-methionine = N(3)-methylpseudouridine(1915) in 23S rRNA + S-adenosyl-L-homocysteine + H(+). In terms of biological role, specifically methylates the pseudouridine at position 1915 (m3Psi1915) in 23S rRNA. The polypeptide is Ribosomal RNA large subunit methyltransferase H (Lactobacillus gasseri (strain ATCC 33323 / DSM 20243 / BCRC 14619 / CIP 102991 / JCM 1131 / KCTC 3163 / NCIMB 11718 / NCTC 13722 / AM63)).